A 1123-amino-acid chain; its full sequence is Alpha-mannosidase E (1123 aa).

Positions M1–T21 are cleaved as a signal peptide. Residues N2 and N38 are each glycosylated (N-linked (GlcNAc...) asparagine). Topologically, residues F22–L1072 are extracellular. Positions 67 and 69 each coordinate Zn(2+). N140 carries N-linked (GlcNAc...) asparagine glycosylation. Zn(2+) contacts are provided by D150 and H409. The active-site Nucleophile is the D150. 6 N-linked (GlcNAc...) asparagine glycosylation sites follow: N521, N675, N858, N887, N975, and N990. Residues I1073–V1093 form a helical membrane-spanning segment. The Cytoplasmic segment spans residues I1094 to P1123.

It belongs to the glycosyl hydrolase 38 family. Requires Zn(2+) as cofactor.

It localises to the membrane. The enzyme catalyses Hydrolysis of terminal, non-reducing alpha-D-mannose residues in alpha-D-mannosides.. This is Alpha-mannosidase E (manE) from Dictyostelium discoideum (Social amoeba).